The chain runs to 210 residues: Guanylate kinase (210 aa).

A Guanylate kinase-like domain is found at 6-184 (GNIYIVVAPS…ARLDLISIVR (179 aa)). 13–20 (APSGAGKT) is a binding site for ATP.

The protein belongs to the guanylate kinase family.

It localises to the cytoplasm. The enzyme catalyses GMP + ATP = GDP + ADP. Functionally, essential for recycling GMP and indirectly, cGMP. The polypeptide is Guanylate kinase (Chromobacterium violaceum (strain ATCC 12472 / DSM 30191 / JCM 1249 / CCUG 213 / NBRC 12614 / NCIMB 9131 / NCTC 9757 / MK)).